A 350-amino-acid polypeptide reads, in one-letter code: uncharacterized protein (350 aa).

3 helical membrane-spanning segments follow: residues 10 to 30 (YSFILCLAVGSVTIYTSEVIG), 51 to 71 (FAGILFTALVQLFSPTPVTLT), and 327 to 347 (ILSLFSVLFTCIVAGLFLKLF).

The protein belongs to the 1-acyl-sn-glycerol-3-phosphate acyltransferase family.

The protein resides in the endoplasmic reticulum membrane. This is an uncharacterized protein from Schizosaccharomyces pombe (strain 972 / ATCC 24843) (Fission yeast).